Consider the following 379-residue polypeptide: tRNA 2-selenouridine synthase (379 aa).

Positions 15–138 constitute a Rhodanese domain; that stretch reads FQQNIPLMDV…ARNYLIKQIE (124 aa). The S-selanylcysteine intermediate role is filled by Cys98.

It belongs to the SelU family. In terms of assembly, monomer.

It catalyses the reaction 5-methylaminomethyl-2-thiouridine(34) in tRNA + selenophosphate + (2E)-geranyl diphosphate + H2O + H(+) = 5-methylaminomethyl-2-selenouridine(34) in tRNA + (2E)-thiogeraniol + phosphate + diphosphate. The catalysed reaction is 5-methylaminomethyl-2-thiouridine(34) in tRNA + (2E)-geranyl diphosphate = 5-methylaminomethyl-S-(2E)-geranyl-thiouridine(34) in tRNA + diphosphate. The enzyme catalyses 5-methylaminomethyl-S-(2E)-geranyl-thiouridine(34) in tRNA + selenophosphate + H(+) = 5-methylaminomethyl-2-(Se-phospho)selenouridine(34) in tRNA + (2E)-thiogeraniol. It carries out the reaction 5-methylaminomethyl-2-(Se-phospho)selenouridine(34) in tRNA + H2O = 5-methylaminomethyl-2-selenouridine(34) in tRNA + phosphate. Functionally, involved in the post-transcriptional modification of the uridine at the wobble position (U34) of tRNA(Lys), tRNA(Glu) and tRNA(Gln). Catalyzes the conversion of 2-thiouridine (S2U-RNA) to 2-selenouridine (Se2U-RNA). Acts in a two-step process involving geranylation of 2-thiouridine (S2U) to S-geranyl-2-thiouridine (geS2U) and subsequent selenation of the latter derivative to 2-selenouridine (Se2U) in the tRNA chain. The chain is tRNA 2-selenouridine synthase from Bdellovibrio bacteriovorus (strain ATCC 15356 / DSM 50701 / NCIMB 9529 / HD100).